Here is a 226-residue protein sequence, read N- to C-terminus: ATP synthase F(0) complex subunit a (226 aa).

Transmembrane regions (helical) follow at residues 12 to 32 (PTMMGLPIVILIIMFPSILFP), 68 to 88 (WALMLMSLILFIGSTNLLGLL), 97 to 117 (QLSMNLGMAIPLWAGTVITGF), 138 to 158 (IPMLVVIETISLFIQPMALAV), 164 to 184 (ITAGHLLMHLIGGAALALMNI), and 200 to 222 (TILEFAVALIQAYVFTLLVSLYL).

The protein belongs to the ATPase A chain family. As to quaternary structure, component of the ATP synthase complex composed at least of ATP5F1A/subunit alpha, ATP5F1B/subunit beta, ATP5MC1/subunit c (homooctomer), MT-ATP6/subunit a, MT-ATP8/subunit 8, ATP5ME/subunit e, ATP5MF/subunit f, ATP5MG/subunit g, ATP5MK/subunit k, ATP5MJ/subunit j, ATP5F1C/subunit gamma, ATP5F1D/subunit delta, ATP5F1E/subunit epsilon, ATP5PF/subunit F6, ATP5PB/subunit b, ATP5PD/subunit d, ATP5PO/subunit OSCP. ATP synthase complex consists of a soluble F(1) head domain (subunits alpha(3) and beta(3)) - the catalytic core - and a membrane F(0) domain - the membrane proton channel (subunits c, a, 8, e, f, g, k and j). These two domains are linked by a central stalk (subunits gamma, delta, and epsilon) rotating inside the F1 region and a stationary peripheral stalk (subunits F6, b, d, and OSCP). Interacts with DNAJC30; interaction is direct.

Its subcellular location is the mitochondrion inner membrane. It catalyses the reaction H(+)(in) = H(+)(out). Its function is as follows. Subunit a, of the mitochondrial membrane ATP synthase complex (F(1)F(0) ATP synthase or Complex V) that produces ATP from ADP in the presence of a proton gradient across the membrane which is generated by electron transport complexes of the respiratory chain. ATP synthase complex consist of a soluble F(1) head domain - the catalytic core - and a membrane F(1) domain - the membrane proton channel. These two domains are linked by a central stalk rotating inside the F(1) region and a stationary peripheral stalk. During catalysis, ATP synthesis in the catalytic domain of F(1) is coupled via a rotary mechanism of the central stalk subunits to proton translocation. With the subunit c (ATP5MC1), forms the proton-conducting channel in the F(0) domain, that contains two crucial half-channels (inlet and outlet) that facilitate proton movement from the mitochondrial intermembrane space (IMS) into the matrix. Protons are taken up via the inlet half-channel and released through the outlet half-channel, following a Grotthuss mechanism. This Felis catus (Cat) protein is ATP synthase F(0) complex subunit a.